Consider the following 240-residue polypeptide: Ribonuclease PH (240 aa).

Residues arginine 87 and 125-127 (GTR) contribute to the phosphate site.

It belongs to the RNase PH family. As to quaternary structure, homohexameric ring arranged as a trimer of dimers.

It carries out the reaction tRNA(n+1) + phosphate = tRNA(n) + a ribonucleoside 5'-diphosphate. In terms of biological role, phosphorolytic 3'-5' exoribonuclease that plays an important role in tRNA 3'-end maturation. Removes nucleotide residues following the 3'-CCA terminus of tRNAs; can also add nucleotides to the ends of RNA molecules by using nucleoside diphosphates as substrates, but this may not be physiologically important. Probably plays a role in initiation of 16S rRNA degradation (leading to ribosome degradation) during starvation. This Pseudomonas syringae pv. syringae (strain B728a) protein is Ribonuclease PH.